A 1556-amino-acid chain; its full sequence is Disco-interacting protein 2 homolog C (1556 aa).

A DMAP1-binding domain is found at 7–120; it reads EGMALPLEVR…PMPSKRRSLV (114 aa). 2 disordered regions span residues 47–157 and 170–189; these read YLPQ…SQGS and GSTT…SGAA. Over residues 81–93 the composition is skewed to basic and acidic residues; sequence GSRDERYRSDVHT. Polar residues-rich tracts occupy residues 120–136 and 144–157; these read VVQT…TSSG and QGDS…SQGS. Residues 170 to 183 are compositionally biased toward low complexity; it reads GSTTSTTSSSSTQS. A Phosphothreonine modification is found at Thr264.

The protein belongs to the DIP2 family.

In Homo sapiens (Human), this protein is Disco-interacting protein 2 homolog C (DIP2C).